The following is a 430-amino-acid chain: tRNA(Ile)-lysidine synthase (430 aa).

27-32 (SGGSDS) contributes to the ATP binding site.

It belongs to the tRNA(Ile)-lysidine synthase family.

The protein resides in the cytoplasm. It carries out the reaction cytidine(34) in tRNA(Ile2) + L-lysine + ATP = lysidine(34) in tRNA(Ile2) + AMP + diphosphate + H(+). Ligates lysine onto the cytidine present at position 34 of the AUA codon-specific tRNA(Ile) that contains the anticodon CAU, in an ATP-dependent manner. Cytidine is converted to lysidine, thus changing the amino acid specificity of the tRNA from methionine to isoleucine. The protein is tRNA(Ile)-lysidine synthase of Rickettsia bellii (strain OSU 85-389).